Reading from the N-terminus, the 375-residue chain is Sulfite efflux pump SSU1 (375 aa).

Over 1–25 (MPSGSGFHNIEEAGEKARKRDDWIA) the chain is Cytoplasmic. A helical transmembrane segment spans residues 26 to 46 (ISNFHPGWFSVNMGTGITAIL). Over 47 to 59 (LQNLPYQFPGLHY) the chain is Extracellular. A helical transmembrane segment spans residues 60–80 (IAVILFILNVIIFFLFLTISI). Residues 81-101 (TRYCLWPDKFKAMLAHPAHSM) are Cytoplasmic-facing. Residues 102 to 122 (LLGTFPMGFATIINCIVFICV) form a helical membrane-spanning segment. Residues 123 to 135 (PVWGEWASRFAWG) lie on the Extracellular side of the membrane. Residues 136–156 (LWWIDAAVSVAICYFVPFMLM) form a helical membrane-spanning segment. Over 157–167 (TKHTSSLETMT) the chain is Cytoplasmic. Residues 168-188 (AAWLLPIVAPVVAAASGGVVA) form a helical membrane-spanning segment. At 189–200 (DSLQNDTHALIT) the chain is on the extracellular side. Residue Asn-193 is glycosylated (N-linked (GlcNAc...) asparagine). Residues 201–221 (ILVCYVMWGSAVPLAMVILVI) form a helical membrane-spanning segment. Topologically, residues 222–234 (YFQRLAIHKLVPR) are cytoplasmic. The chain crosses the membrane as a helical span at residues 235 to 255 (AAIVSALLPIGPLGQGGFGLM). Residues 256 to 277 (QLGVVAKRVFPRLDFLAPIAGD) lie on the Extracellular side of the membrane. A helical membrane pass occupies residues 278–298 (IFYVMGAFIAMIMWGFGLIWL). The Cytoplasmic portion of the chain corresponds to 299–309 (WFALASFTRGK). Residues 310-330 (FYFNIGWWAFTFPLGVFTTAT) traverse the membrane as a helical segment. At 331–343 (TQMGKEFNSPFFD) the chain is on the extracellular side. The helical transmembrane segment at 344-364 (ILGTFFSIVVTCMWVLVFALT) threads the bilayer. Residues 365-375 (VYKSCTKELFR) are Cytoplasmic-facing.

The protein belongs to the tellurite-resistance/dicarboxylate transporter (TDT) family.

It is found in the cell membrane. Functionally, sulphite efflux pump required for the secretion of sulphite as a reducing agent. In the presence of sulphite, cystine in keratin is directly cleaved to cysteine and S-sulphocysteine, and thereby, reduced proteins become accessible to hydrolysis by a variety of secreted endo- and exoproteases. Excretion of sulphite mediated by an efflux pump also represents a detoxification pathway for dermatophytes during infection of the epidermal stratum corneum, hair and nails, which are rich in cysteine. In Arthroderma benhamiae (strain ATCC MYA-4681 / CBS 112371) (Trichophyton mentagrophytes), this protein is Sulfite efflux pump SSU1.